A 303-amino-acid polypeptide reads, in one-letter code: Pycsar effector protein XpPycTIR (303 aa).

An a nucleoside 3',5'-cyclic phosphate-binding site is contributed by 14–138 (LVATLTEHRL…RRIAATLARR (125 aa)). The interval 154-273 (RVFIMSSVEA…DLAGLTTIPY (120 aa)) is TIR-like.

It is found in the cytoplasm. The catalysed reaction is NAD(+) + H2O = ADP-D-ribose + nicotinamide + H(+). In terms of biological role, pycsar (pyrimidine cyclase system for antiphage resistance) provides immunity against bacteriophage. The pyrimidine cyclase (PycC) synthesizes cyclic nucleotides in response to infection; these serve as specific second messenger signals. The signals activate the adjacent effector, leading to bacterial cell death and abortive phage infection. A clade B Pycsar system. Functionally, the effector gene of a two-gene Pycsar system. Expression of this and adjacent uridylate cyclase XpPycC (AC P0DV28) confers resistance to bacteriophage T7. When cells expressing the Pycsar system are infected by phage T7 at low multiplicity of infection (0.2 MOI) the culture survivey, at 2.0 MOI bacteria enter growth arrest. The same cells enter growth arrest after exposure to 2.5 mM cUMP but not cCMP; the effector protein responds only to the cUMP usually produced by its cognate NTP cyclase. NAD(+) levels in infected cells are depleted between 5 and 10 minutes after infection with T7 at MOI of 2. Probably only responds to cUMP. In Xanthomonas perforans, this protein is Pycsar effector protein XpPycTIR.